We begin with the raw amino-acid sequence, 58 residues long: Large ribosomal subunit protein eL37 (58 aa).

Zn(2+) is bound by residues Cys20, Cys23, Cys35, and Cys38. The C4-type zinc-finger motif lies at 20–38 (CRRCGEKSYHVKKERCSSC). Residues 39–58 (GFGDSASRRGYAWQSKSGDN) form a disordered region.

It belongs to the eukaryotic ribosomal protein eL37 family. Zn(2+) serves as cofactor.

Its function is as follows. Binds to the 23S rRNA. This Halorubrum lacusprofundi (strain ATCC 49239 / DSM 5036 / JCM 8891 / ACAM 34) protein is Large ribosomal subunit protein eL37.